The chain runs to 573 residues: DNA polymerase lambda (573 aa).

The region spanning 35-131 is the BRCT domain; sequence DARGWLSSLR…KLTDTDGFSL (97 aa). The tract at residues 126–235 is disordered; it reads TDGFSLSSPK…GPDPAPEALG (110 aa). Residues 127-149 show a composition bias toward polar residues; it reads DGFSLSSPKRSLNEPQPSKSGQD. Residues 263-277 form a DNA-binding region; sequence KAYNVQGDKWRALGY. The Schiff-base intermediate with DNA role is filled by lysine 310. The segment at 343–346 is DNA-binding; sequence GTKT. DCTP is bound by residues arginine 384, 415–418, and 424–427; these read SFRR and GDVD. The tract at residues 418–427 is involved in primer binding; sequence RGKVTCGDVD. Residues aspartate 425, aspartate 427, and aspartate 488 each coordinate Mn(2+). Residues 464–503 are DNA-binding; that stretch reads ENGQQQKYLGVCRLPGAGQRHRRLDIIVVPYSEFACALLY. Asparagine 511 lines the dCTP pocket.

The protein belongs to the DNA polymerase type-X family. In terms of assembly, interacts with PCNA. Interacts with PAXX; promoting POLL recruitment to double-strand breaks (DSBs) and stimulation of the end-filling activity of POLL. Interacts with XRCC4; promoting POLL recruitment to double-strand breaks (DSBs) and stimulation of the end-filling activity of POLL. Interacts with NHEJ1/XLF; promoting POLL recruitment to double-strand breaks (DSBs) and stimulation of the end-filling activity of POLL. Mn(2+) is required as a cofactor.

It is found in the nucleus. It catalyses the reaction DNA(n) + a 2'-deoxyribonucleoside 5'-triphosphate = DNA(n+1) + diphosphate. Functionally, DNA polymerase that functions in several pathways of DNA repair. Involved in base excision repair (BER) responsible for repair of lesions that give rise to abasic (AP) sites in DNA. Also contributes to DNA double-strand break repair by non-homologous end joining and homologous recombination. Has both template-dependent and template-independent (terminal transferase) DNA polymerase activities. Also has a 5'-deoxyribose-5-phosphate lyase (dRP lyase) activity. This is DNA polymerase lambda from Rattus norvegicus (Rat).